The primary structure comprises 266 residues: Putative carbamate hydrolase RutD (266 aa).

The AB hydrolase-1 domain maps to 14–115 (PVVVLISGLG…TMLVSVNGWL (102 aa)).

It belongs to the AB hydrolase superfamily. Hydrolase RutD family.

The enzyme catalyses carbamate + 2 H(+) = NH4(+) + CO2. Involved in pyrimidine catabolism. May facilitate the hydrolysis of carbamate, a reaction that can also occur spontaneously. The sequence is that of Putative carbamate hydrolase RutD from Shigella flexneri serotype X (strain 2002017).